Consider the following 279-residue polypeptide: Inorganic pyrophosphatase 2 (279 aa).

Catalysis depends on Asp-12, which acts as the Nucleophile. Residues Asp-12 and Asp-14 each coordinate Mg(2+). Residue Asp-14 is the Proton donor of the active site. 2 residues coordinate substrate: Asp-23 and Asp-98. Asp-182 provides a ligand contact to Mg(2+).

The protein belongs to the HAD-like hydrolase superfamily. Tetramer. Mg(2+) is required as a cofactor.

The catalysed reaction is diphosphate + H2O = 2 phosphate + H(+). Catalyzes the specific cleavage of pyrophosphate. The protein is Inorganic pyrophosphatase 2 of Arabidopsis thaliana (Mouse-ear cress).